A 338-amino-acid polypeptide reads, in one-letter code: Phenylalanine--tRNA ligase alpha subunit (338 aa).

Glutamate 252 serves as a coordination point for Mg(2+).

The protein belongs to the class-II aminoacyl-tRNA synthetase family. Phe-tRNA synthetase alpha subunit type 1 subfamily. Tetramer of two alpha and two beta subunits. The cofactor is Mg(2+).

It is found in the cytoplasm. The catalysed reaction is tRNA(Phe) + L-phenylalanine + ATP = L-phenylalanyl-tRNA(Phe) + AMP + diphosphate + H(+). The sequence is that of Phenylalanine--tRNA ligase alpha subunit from Pseudomonas aeruginosa (strain ATCC 15692 / DSM 22644 / CIP 104116 / JCM 14847 / LMG 12228 / 1C / PRS 101 / PAO1).